The following is a 146-amino-acid chain: NADH-quinone oxidoreductase subunit A (146 aa).

3 helical membrane passes run 4 to 24 (IYHW…VFML), 63 to 83 (LIAM…AWAI), and 91 to 111 (IGFS…IYLI).

This sequence belongs to the complex I subunit 3 family. NDH-1 is composed of 13 different subunits. Subunits NuoA, H, J, K, L, M, N constitute the membrane sector of the complex.

The protein resides in the cell inner membrane. It carries out the reaction a quinone + NADH + 5 H(+)(in) = a quinol + NAD(+) + 4 H(+)(out). Functionally, NDH-1 shuttles electrons from NADH, via FMN and iron-sulfur (Fe-S) centers, to quinones in the respiratory chain. The immediate electron acceptor for the enzyme in this species is believed to be ubiquinone. Couples the redox reaction to proton translocation (for every two electrons transferred, four hydrogen ions are translocated across the cytoplasmic membrane), and thus conserves the redox energy in a proton gradient. This is NADH-quinone oxidoreductase subunit A from Blochmanniella pennsylvanica (strain BPEN).